The chain runs to 505 residues: Maturase K (505 aa).

This sequence belongs to the intron maturase 2 family. MatK subfamily.

It localises to the plastid. Its subcellular location is the chloroplast. Usually encoded in the trnK tRNA gene intron. Probably assists in splicing its own and other chloroplast group II introns. This chain is Maturase K, found in Illicium oligandrum (Star anise).